We begin with the raw amino-acid sequence, 180 residues long: Probable chorismate pyruvate-lyase (180 aa).

Residues arginine 76, leucine 113, and glutamate 171 each coordinate substrate.

The protein belongs to the UbiC family.

It is found in the cytoplasm. The catalysed reaction is chorismate = 4-hydroxybenzoate + pyruvate. Its pathway is cofactor biosynthesis; ubiquinone biosynthesis. Functionally, removes the pyruvyl group from chorismate, with concomitant aromatization of the ring, to provide 4-hydroxybenzoate (4HB) for the ubiquinone pathway. In Pseudoalteromonas translucida (strain TAC 125), this protein is Probable chorismate pyruvate-lyase.